A 543-amino-acid polypeptide reads, in one-letter code: Chaperonin GroEL (543 aa).

ATP contacts are provided by residues 29–32 (TLGP), 86–90 (DGTTT), Gly413, 476–478 (NAA), and Asp492.

Belongs to the chaperonin (HSP60) family. In terms of assembly, forms a cylinder of 14 subunits composed of two heptameric rings stacked back-to-back. Interacts with the co-chaperonin GroES.

It localises to the cytoplasm. The enzyme catalyses ATP + H2O + a folded polypeptide = ADP + phosphate + an unfolded polypeptide.. Its function is as follows. Together with its co-chaperonin GroES, plays an essential role in assisting protein folding. The GroEL-GroES system forms a nano-cage that allows encapsulation of the non-native substrate proteins and provides a physical environment optimized to promote and accelerate protein folding. This is Chaperonin GroEL from Streptococcus pyogenes serotype M1.